The sequence spans 112 residues: Tyrosine-protein phosphatase 8 (112 aa).

The region spanning 1–112 (ENSTAIVMIT…ANSEYGPVVV (112 aa)) is the Tyrosine-protein phosphatase domain.

Belongs to the protein-tyrosine phosphatase family.

It carries out the reaction O-phospho-L-tyrosyl-[protein] + H2O = L-tyrosyl-[protein] + phosphate. The protein is Tyrosine-protein phosphatase 8 (STY-8) of Styela plicata (Wrinkled sea squirt).